The sequence spans 588 residues: MITRLSTLFLRTLREDPADAEVPSHKLLVRAGYIRRVAPGVYSWLPLGLRALRNIEQVVREEMDAIGGQELLFPGLLPREPYETTQRWTEYGDSLFRLKDRKGADYLLGPTHEEMFASTVKDLYSSYKDFPVTLYQIQTKYRDEERPRAGILRGREFVMKDSYSFDMTDAGLEESYARHRAAYQRIFDRLGIEYVICKATSGAMGGSASEEFLAVSANGEDTFVRATDGDFAANVEAVVTQPGQERPIEGLPEAVVHETPVSETIETLVAWANSIGVTVDGREVQASDTLKCIVVKTREPGAEEWELTGVLVPGDREVDMKRLEASLEPAEVELAVEADFAKYPFLVKGYVGPVGLARNGVRVLADPRVVTGTSWITGADEKERHVVGLVAGRDFTPDGFIEAAEIREGDPAPEGQGTLTLARGIEIGHIFQLGRKYTEAFDVQILDENGKRAIPTMGSYGIGVSRLLAVLAEQRHDEAGLNWSPAVAPYQVHVVAANKDAAAIEAAERYATELSQAGIDVLFDDRPKVSPGVKFKDAELLGMPFALILGRGYADGTVELRVRGGEKTELPVDEAVETIVRLVNEARG.

It belongs to the class-II aminoacyl-tRNA synthetase family. ProS type 1 subfamily. As to quaternary structure, homodimer.

The protein localises to the cytoplasm. It catalyses the reaction tRNA(Pro) + L-proline + ATP = L-prolyl-tRNA(Pro) + AMP + diphosphate. Its function is as follows. Catalyzes the attachment of proline to tRNA(Pro) in a two-step reaction: proline is first activated by ATP to form Pro-AMP and then transferred to the acceptor end of tRNA(Pro). As ProRS can inadvertently accommodate and process non-cognate amino acids such as alanine and cysteine, to avoid such errors it has two additional distinct editing activities against alanine. One activity is designated as 'pretransfer' editing and involves the tRNA(Pro)-independent hydrolysis of activated Ala-AMP. The other activity is designated 'posttransfer' editing and involves deacylation of mischarged Ala-tRNA(Pro). The misacylated Cys-tRNA(Pro) is not edited by ProRS. This is Proline--tRNA ligase from Corynebacterium efficiens (strain DSM 44549 / YS-314 / AJ 12310 / JCM 11189 / NBRC 100395).